The primary structure comprises 514 residues: MALLNRLAKTFSPYYGLNKVEQKLLIKIDWFILSYCCVSYFINYLDRSSINNAYLSGMQEDLKMHGNELQDINVVFTCGYIIGQLPGSYALQRVPARLWFSVMNILWGLMTIFSFAVHSVRALMILRFFMAVAEASTFAGTHYILGAWYKESELCKRAGIFSASGLVGTMFAGYLQTAVHSSLNGKGGLSGWRWLFIIDGILTIPLSLYGLFLFPDVPETTKAPYFTEQEKELSFKRLPARPKKKPLTLKAIKDIVRSWRIYGLCILWIFSGETQAIAVNVLMGQWMKWSNKFSVAQINNYPTVITAVGVVSTLGASVISDKLAGNPRWPFGLFLCVITTVSATILLAWNVPDGAKFFAYFASGCTYAGQAVWFSWANDICRDNDQERGVVVFLMNMCQNIWHIWWAPIMYPNTDTPRFIKGLIGLLVVGGIVFVSSCIVSYMQIRDKRIKRSIQDAKDFDDVFTEHESLELKKIGKNDEESLNTTNAVKEISSPGLVITRQRISMPKETNAQD.

Transmembrane regions (helical) follow at residues 24 to 44, 72 to 92, 98 to 118, 128 to 148, 159 to 179, 194 to 214, 263 to 283, 300 to 320, 329 to 349, 357 to 377, 390 to 410, and 423 to 443; these read LLIK…FINY, INVV…YALQ, LWFS…FAVH, FFMA…LGAW, GIFS…QTAV, WLFI…LFLF, GLCI…NVLM, NYPT…SVIS, WPFG…LLAW, FFAY…FSWA, VVVF…APIM, and LIGL…VSYM.

The protein belongs to the major facilitator superfamily. Allantoate permease family.

Its subcellular location is the cell membrane. Its function is as follows. Transports pantothenate into the cell. The protein is Pantothenate transporter liz1 (liz1) of Schizosaccharomyces pombe (strain 972 / ATCC 24843) (Fission yeast).